The chain runs to 847 residues: DNA mismatch repair protein MutS (847 aa).

An ATP-binding site is contributed by 603-610 (GPNMSGKS).

Belongs to the DNA mismatch repair MutS family.

Its function is as follows. This protein is involved in the repair of mismatches in DNA. It is possible that it carries out the mismatch recognition step. This protein has a weak ATPase activity. This is DNA mismatch repair protein MutS from Streptococcus suis (strain 98HAH33).